Reading from the N-terminus, the 889-residue chain is Chitin synthase I (889 aa).

The N-linked (GlcNAc...) asparagine glycan is linked to Asn-43. Positions Gly-94–Ala-138 are disordered. Over residues Tyr-126 to Pro-137 the composition is skewed to polar residues. A glycan (N-linked (GlcNAc...) asparagine) is linked at Asn-199. Helical transmembrane passes span Ser-431–Leu-451, Arg-530–Phe-550, Leu-560–Ile-580, Ile-606–Ser-626, Met-641–Val-661, Thr-687–Phe-707, Phe-716–Cys-736, Gly-815–Ala-835, and Ile-861–Leu-881.

It belongs to the chitin synthase family. Class I subfamily. As to expression, expressed in hyphal bodies.

Its subcellular location is the cell membrane. The enzyme catalyses [(1-&gt;4)-N-acetyl-beta-D-glucosaminyl](n) + UDP-N-acetyl-alpha-D-glucosamine = [(1-&gt;4)-N-acetyl-beta-D-glucosaminyl](n+1) + UDP + H(+). In terms of biological role, polymerizes chitin, a structural polymer of the cell wall and septum, by transferring the sugar moiety of UDP-GlcNAc to the non-reducing end of the growing chitin polymer. Contributes to the production of conidia and the ability of fungal conidia to germinate. Not involved in fungal stress tolerances. This chain is Chitin synthase I, found in Metarhizium acridum (strain CQMa 102).